The chain runs to 356 residues: Glutamine synthetase (356 aa).

The GS beta-grasp domain maps to 19-99 (IIAEYIWIGG…VMCDCYTPRG (81 aa)). The GS catalytic domain maps to 106-356 (KRYNAAKILS…IAQTTILWKP (251 aa)).

The protein belongs to the glutamine synthetase family. Homooctamer.

The protein localises to the cytoplasm. It catalyses the reaction L-glutamate + NH4(+) + ATP = L-glutamine + ADP + phosphate + H(+). In Hordeum vulgare (Barley), this protein is Glutamine synthetase.